Here is a 608-residue protein sequence, read N- to C-terminus: DNA ligase (608 aa).

Position 266 (Glu266) interacts with ATP. Catalysis depends on Lys268, which acts as the N6-AMP-lysine intermediate. The ATP site is built by Arg273, Arg288, Glu318, Phe358, Arg435, and Lys441.

Belongs to the ATP-dependent DNA ligase family. The cofactor is Mg(2+). Mn(2+) serves as cofactor.

The enzyme catalyses ATP + (deoxyribonucleotide)n-3'-hydroxyl + 5'-phospho-(deoxyribonucleotide)m = (deoxyribonucleotide)n+m + AMP + diphosphate.. It carries out the reaction ADP + (deoxyribonucleotide)n-3'-hydroxyl + 5'-phospho-(deoxyribonucleotide)m = (deoxyribonucleotide)n+m + AMP + phosphate.. The catalysed reaction is GTP + (deoxyribonucleotide)n-3'-hydroxyl + 5'-phospho-(deoxyribonucleotide)m = (deoxyribonucleotide)n+m + GMP + diphosphate.. Functionally, DNA ligase that seals nicks in double-stranded DNA during DNA replication, DNA recombination and DNA repair. Can use ATP, ADP and GTP, but not CTP, TTP or NAD(+). The chain is DNA ligase from Hyperthermus butylicus (strain DSM 5456 / JCM 9403 / PLM1-5).